Consider the following 313-residue polypeptide: Putative zinc finger protein 077L (313 aa).

The C3H1-type zinc-finger motif lies at 174–199; it reads CFSITKGIECPHYSCTYIHNYSQIEH. Positions 294–313 are disordered; it reads SDDSDSENNDEDDDWKIDLF. Residues 296–313 are compositionally biased toward acidic residues; sequence DSDSENNDEDDDWKIDLF.

The protein belongs to the IIV-6 077L family.

The polypeptide is Putative zinc finger protein 077L (Invertebrate iridescent virus 6 (IIV-6)).